Consider the following 169-residue polypeptide: Major fimbrial subunit SMF-1 (169 aa).

Residues M1–A11 form the signal peptide.

The protein belongs to the fimbrial protein family.

The protein localises to the fimbrium. Its function is as follows. Involved in adherence to eukaryotic epithelial cells and abiotic surfaces. Mediates agglutination of animal red blood cells. The protein is Major fimbrial subunit SMF-1 of Stenotrophomonas maltophilia (strain K279a).